The primary structure comprises 1147 residues: Putative ATP-dependent RNA helicase L377 (1147 aa).

Residues 108–315 (INPNTPYRGL…VELINYLRPK (208 aa)) enclose the Helicase ATP-binding domain. 121-128 (WGTGVGKS) serves as a coordination point for ATP. Residues 264-267 (DEAH) carry the DEAH box motif.

It belongs to the DEAD box helicase family. DEAH subfamily.

The protein localises to the virion. It catalyses the reaction ATP + H2O = ADP + phosphate + H(+). This chain is Putative ATP-dependent RNA helicase L377, found in Acanthamoeba polyphaga (Amoeba).